The chain runs to 181 residues: dTDP-4-dehydrorhamnose 3,5-epimerase (181 aa).

Substrate contacts are provided by residues arginine 23, glutamate 28, 47-49 (QDN), and arginine 59. Histidine 62 functions as the Proton acceptor in the catalytic mechanism. Substrate-binding residues include lysine 72 and histidine 119. The active-site Proton donor is tyrosine 132. Substrate contacts are provided by glutamate 143 and lysine 167.

The protein belongs to the dTDP-4-dehydrorhamnose 3,5-epimerase family. In terms of assembly, homodimer.

The catalysed reaction is dTDP-4-dehydro-6-deoxy-alpha-D-glucose = dTDP-4-dehydro-beta-L-rhamnose. Its pathway is carbohydrate biosynthesis; dTDP-L-rhamnose biosynthesis. It functions in the pathway bacterial outer membrane biogenesis; LPS O-antigen biosynthesis. Its function is as follows. Catalyzes the epimerization of the C3' and C5'positions of dTDP-6-deoxy-D-xylo-4-hexulose, forming dTDP-6-deoxy-L-lyxo-4-hexulose. In Shigella flexneri, this protein is dTDP-4-dehydrorhamnose 3,5-epimerase (rfbC).